A 198-amino-acid chain; its full sequence is V-type ATP synthase subunit E (198 aa).

This sequence belongs to the V-ATPase E subunit family.

Produces ATP from ADP in the presence of a proton gradient across the membrane. The polypeptide is V-type ATP synthase subunit E (Acetivibrio thermocellus (strain ATCC 27405 / DSM 1237 / JCM 9322 / NBRC 103400 / NCIMB 10682 / NRRL B-4536 / VPI 7372) (Clostridium thermocellum)).